The sequence spans 74 residues: Acyl carrier protein (74 aa).

A Carrier domain is found at 1–74 (MFEKVRKIIA…DVVEYIKNNS (74 aa)). Serine 34 carries the post-translational modification O-(pantetheine 4'-phosphoryl)serine.

The protein belongs to the acyl carrier protein (ACP) family. 4'-phosphopantetheine is transferred from CoA to a specific serine of apo-ACP by AcpS. This modification is essential for activity because fatty acids are bound in thioester linkage to the sulfhydryl of the prosthetic group.

It localises to the cytoplasm. Its pathway is lipid metabolism; fatty acid biosynthesis. Carrier of the growing fatty acid chain in fatty acid biosynthesis. The sequence is that of Acyl carrier protein from Acetivibrio thermocellus (strain ATCC 27405 / DSM 1237 / JCM 9322 / NBRC 103400 / NCIMB 10682 / NRRL B-4536 / VPI 7372) (Clostridium thermocellum).